Reading from the N-terminus, the 516-residue chain is Sodium channel protein Nach (516 aa).

Over 1-49 (MGHEEELSPEQVDLKVSPLMGSLKRTWNDFCATSSIHGLRYTRDEDTNR) the chain is Cytoplasmic. Residues 50–70 (IVHFVWLLISLVMFICAVVMA) form a helical membrane-spanning segment. The Extracellular segment spans residues 71 to 452 (RTFYIDFRSN…LVSNLGSAFS (382 aa)). Residues Asn-128, Asn-165, Asn-220, and Asn-348 are each glycosylated (N-linked (GlcNAc...) asparagine). The chain crosses the membrane as a helical span at residues 453-473 (LFVGMSMLSVVEIMYYFSVIL). Residues 474 to 516 (RKNYVLECEARKKMLHKGPKFAWPKANDSHSKHQKSVFIIHKM) are Cytoplasmic-facing.

Belongs to the amiloride-sensitive sodium channel (TC 1.A.6) family.

Its subcellular location is the membrane. Functionally, part of a complex that plays a role in tracheal liquid clearance. Probable role in sodium transport. This Drosophila ananassae (Fruit fly) protein is Sodium channel protein Nach (Nach).